A 128-amino-acid polypeptide reads, in one-letter code: Fluoride-specific ion channel FluC (128 aa).

The next 4 membrane-spanning stretches (helical) occupy residues Ile5–Gly25, Leu35–Phe55, Leu67–Val87, and Phe96–Leu116. Na(+) is bound by residues Gly75 and Thr78.

Belongs to the fluoride channel Fluc/FEX (TC 1.A.43) family.

Its subcellular location is the cell inner membrane. The catalysed reaction is fluoride(in) = fluoride(out). With respect to regulation, na(+) is not transported, but it plays an essential structural role and its presence is essential for fluoride channel function. Fluoride-specific ion channel. Important for reducing fluoride concentration in the cell, thus reducing its toxicity. The chain is Fluoride-specific ion channel FluC from Burkholderia mallei (strain NCTC 10247).